Consider the following 255-residue polypeptide: Complement C1q-like protein 3 (255 aa).

Positions 1 to 20 are cleaved as a signal peptide; it reads MVLLLVILIPVLVSSAGTSA. Residues 39-109 form a disordered region; sequence KAPSTAATPD…GLPGPPGAPG (71 aa). One can recognise a Collagen-like domain in the interval 61–111; the sequence is GPKGEAGRPGKAGPRGPPGEPGPPGPMGPPGEKGEPGRQGLPGPPGAPGLN. The segment covering 75–89 has biased composition (pro residues); it reads RGPPGEPGPPGPMGP. The 134-residue stretch at 122-255 folds into the C1q domain; it reads STVPKIAFYA…TFSGFIIYAD (134 aa).

As to quaternary structure, forms homooligomers. Interacts with ADGRB3. Interacts with C1QL2 and C1QL4, when proteins are coexpressed; this interaction does not occur after secretion. As to expression, highly expressed in adipose tissue, with expression levels at least 2 orders of magnitude higher than in other tissues, including brain and kidney.

Its subcellular location is the secreted. Its function is as follows. May regulate the number of excitatory synapses that are formed on hippocampus neurons. Has no effect on inhibitory synapses. Plays a role in glucose homeostasis. Via AMPK signaling pathway, stimulates glucose uptake in adipocytes, myotubes and hepatocytes and enhances insulin-stimulated glucose uptake. In a hepatoma cell line, reduces the expression of gluconeogenic enzymes G6PC1 and PCK1 and hence decreases de novo glucose production. This is Complement C1q-like protein 3 (C1QL3) from Homo sapiens (Human).